Consider the following 414-residue polypeptide: Putative competence-damage inducible protein (414 aa).

It belongs to the CinA family.

This is Putative competence-damage inducible protein from Geobacillus kaustophilus (strain HTA426).